Here is a 1594-residue protein sequence, read N- to C-terminus: Protein SHORTAGE IN CHIASMATA 1 (1594 aa).

Disordered stretches follow at residues 1148 to 1180, 1239 to 1283, 1396 to 1426, 1491 to 1523, and 1536 to 1594; these read DSRS…SKKK, APFK…QPDF, AADI…YADN, RSRA…NTKR, and GGNK…LVWK. The span at 1151–1165 shows a compositional bias: low complexity; it reads SVMTDSSSSVSSGPD. Basic and acidic residues-rich tracts occupy residues 1254–1265 and 1402–1414; these read PSKDPERFDKKS and SSER…DSKY. A compositionally biased stretch (polar residues) spans 1577–1594; the sequence is QSLSYTANGTGQTKLVWK.

This sequence belongs to the XPF family. As to quaternary structure, interacts with PTD. As to expression, highest levels in young buds, where male meiosis occurs. Also present at low levels in plantlets, leaves, flowers, and roots.

It localises to the nucleus. Essential for the formation of class I meiotic crossovers. The sequence is that of Protein SHORTAGE IN CHIASMATA 1 from Arabidopsis thaliana (Mouse-ear cress).